The primary structure comprises 189 residues: Glycerol-3-phosphate acyltransferase (189 aa).

5 helical membrane-spanning segments follow: residues 1–21 (MFWLLALLAYLLGSLSFAIVL), 50–70 (KLAILTLLGDLCKGLLPVLLA), 77–97 (LHAQAWVGVCAVLGHLFPLYF), 111–131 (MLMGLYFPAALLAIGAWLLTF), and 151–171 (LLAWREPEALLPITVLTAMIV).

The protein belongs to the PlsY family. As to quaternary structure, probably interacts with PlsX.

Its subcellular location is the cell inner membrane. It catalyses the reaction an acyl phosphate + sn-glycerol 3-phosphate = a 1-acyl-sn-glycero-3-phosphate + phosphate. Its pathway is lipid metabolism; phospholipid metabolism. In terms of biological role, catalyzes the transfer of an acyl group from acyl-phosphate (acyl-PO(4)) to glycerol-3-phosphate (G3P) to form lysophosphatidic acid (LPA). This enzyme utilizes acyl-phosphate as fatty acyl donor, but not acyl-CoA or acyl-ACP. This Pseudomonas putida (strain GB-1) protein is Glycerol-3-phosphate acyltransferase.